A 313-amino-acid polypeptide reads, in one-letter code: Aspartate carbamoyltransferase catalytic subunit (313 aa).

The carbamoyl phosphate site is built by arginine 59 and threonine 60. Lysine 87 provides a ligand contact to L-aspartate. The carbamoyl phosphate site is built by arginine 109, histidine 137, and glutamine 140. The L-aspartate site is built by arginine 170 and arginine 224. Carbamoyl phosphate is bound by residues glycine 265 and proline 266.

Belongs to the aspartate/ornithine carbamoyltransferase superfamily. ATCase family. As to quaternary structure, heterododecamer (2C3:3R2) of six catalytic PyrB chains organized as two trimers (C3), and six regulatory PyrI chains organized as three dimers (R2).

The catalysed reaction is carbamoyl phosphate + L-aspartate = N-carbamoyl-L-aspartate + phosphate + H(+). It functions in the pathway pyrimidine metabolism; UMP biosynthesis via de novo pathway; (S)-dihydroorotate from bicarbonate: step 2/3. Functionally, catalyzes the condensation of carbamoyl phosphate and aspartate to form carbamoyl aspartate and inorganic phosphate, the committed step in the de novo pyrimidine nucleotide biosynthesis pathway. This is Aspartate carbamoyltransferase catalytic subunit from Sinorhizobium medicae (strain WSM419) (Ensifer medicae).